Consider the following 478-residue polypeptide: Putative multidrug resistance outer membrane protein MdtQ (478 aa).

A signal peptide spans 1 to 21; that stretch reads MNRDSFYPAIACFPLLLMLAG. Cysteine 22 is lipidated: N-palmitoyl cysteine. Cysteine 22 carries the S-diacylglycerol cysteine lipid modification.

The protein belongs to the outer membrane factor (OMF) (TC 1.B.17) family.

It localises to the cell outer membrane. Its function is as follows. Could be involved in resistance to puromycin, acriflavine and tetraphenylarsonium chloride. This is Putative multidrug resistance outer membrane protein MdtQ (mdtQ) from Escherichia coli (strain K12).